The sequence spans 797 residues: Probable DNA polymerase (797 aa).

This sequence belongs to the DNA polymerase type-B family.

It is found in the mitochondrion. The catalysed reaction is DNA(n) + a 2'-deoxyribonucleoside 5'-triphosphate = DNA(n+1) + diphosphate. In Agaricus bitorquis (Pavement mushroom), this protein is Probable DNA polymerase.